The following is a 216-amino-acid chain: MNLILMGLPGAGKGTQAEQIVAKYNIPHISTGDMFRAAMKAETEMGLQAKSFIDKGALVPDEVTIGIVRERLSQEDCVRGFLLDGFPRTVAQASALEEIMKDLGKKIDYVLNINVDSGLLLKRLTGRRICKECGATYHLEFNAPAKADVCDKCGGELYQRSDDNEETVANRLDVNIKQTKPLLDFYEELGYLQSINGEQDINKVFADIDVLIGGLA.

An ATP-binding site is contributed by 10-15 (GAGKGT). Residues 30–59 (STGDMFRAAMKAETEMGLQAKSFIDKGALV) are NMP. AMP is bound by residues T31, R36, 57–59 (ALV), 85–88 (GFPR), and Q92. The LID stretch occupies residues 126-163 (GRRICKECGATYHLEFNAPAKADVCDKCGGELYQRSDD). R127 is a binding site for ATP. Residues C130 and C133 each contribute to the Zn(2+) site. An ATP-binding site is contributed by 136–137 (TY). Zn(2+) is bound by residues C150 and C153. AMP is bound by residues R160 and R171. Q199 provides a ligand contact to ATP.

The protein belongs to the adenylate kinase family. Monomer.

The protein localises to the cytoplasm. The catalysed reaction is AMP + ATP = 2 ADP. It participates in purine metabolism; AMP biosynthesis via salvage pathway; AMP from ADP: step 1/1. Functionally, catalyzes the reversible transfer of the terminal phosphate group between ATP and AMP. Plays an important role in cellular energy homeostasis and in adenine nucleotide metabolism. This is Adenylate kinase from Bacillus anthracis (strain A0248).